The primary structure comprises 471 residues: Alpha-galactosidase 1 (471 aa).

Positions 1–18 are cleaved as a signal peptide; the sequence is MFAFYFLTACISLKGVFG. C42 and C74 are oxidised to a cystine. The substrate site is built by D72 and D73. Residue N105 is glycosylated (N-linked (GlcNAc...) asparagine). C121 and C151 are oxidised to a cystine. K147 lines the substrate pocket. The active-site Nucleophile is the D149. An N-linked (GlcNAc...) asparagine glycan is attached at N175. R205 provides a ligand contact to substrate. D209 (proton donor) is an active-site residue. 2 disulfide bridges follow: C221/C237 and C223/C230. Substrate is bound at residue Q251. N270, N370, N403, N413, N422, N435, and N454 each carry an N-linked (GlcNAc...) asparagine glycan.

It belongs to the glycosyl hydrolase 27 family. As to quaternary structure, homotetramer.

Its subcellular location is the secreted. It carries out the reaction Hydrolysis of terminal, non-reducing alpha-D-galactose residues in alpha-D-galactosides, including galactose oligosaccharides, galactomannans and galactolipids.. This Saccharomyces cerevisiae (Baker's yeast) protein is Alpha-galactosidase 1 (MEL1).